Consider the following 350-residue polypeptide: Chorismate synthase (350 aa).

2 residues coordinate NADP(+): Arg-39 and Arg-45. Residues 85–104 (KDKKVPPVTRPRPGHADLPG) are disordered. FMN contacts are provided by residues 119 to 121 (RAS), 213 to 214 (QG), Gly-258, 273 to 277 (KPIPT), and Arg-299.

Belongs to the chorismate synthase family. As to quaternary structure, homotetramer. Requires FMNH2 as cofactor.

It catalyses the reaction 5-O-(1-carboxyvinyl)-3-phosphoshikimate = chorismate + phosphate. Its pathway is metabolic intermediate biosynthesis; chorismate biosynthesis; chorismate from D-erythrose 4-phosphate and phosphoenolpyruvate: step 7/7. Catalyzes the anti-1,4-elimination of the C-3 phosphate and the C-6 proR hydrogen from 5-enolpyruvylshikimate-3-phosphate (EPSP) to yield chorismate, which is the branch point compound that serves as the starting substrate for the three terminal pathways of aromatic amino acid biosynthesis. This reaction introduces a second double bond into the aromatic ring system. This is Chorismate synthase from Caldanaerobacter subterraneus subsp. tengcongensis (strain DSM 15242 / JCM 11007 / NBRC 100824 / MB4) (Thermoanaerobacter tengcongensis).